The primary structure comprises 305 residues: Protoheme IX farnesyltransferase (305 aa).

A run of 9 helical transmembrane segments spans residues 29 to 49 (VTQLAVFCAIIGMFLATPGMV), 51 to 71 (WSVLIGGAAGIWLLAGAAFAI), 101 to 121 (TLIFSAVLGGAGMWLLHVFAN), 123 to 143 (LTMWLTFATFLGYAVVYTILL), 151 to 171 (IVIGGLSGAMPPALGWSAVSG), 177 to 197 (AWFLVLIIFTWTPPHFWALAL), 221 to 241 (LLHILLYTLIMIAATLLPFVY), 244 to 264 (SGYIYLVAALGLGLVFLGYAW), and 283 to 303 (ILYLSLLFAVLLVDHYFKFVP).

It belongs to the UbiA prenyltransferase family. Protoheme IX farnesyltransferase subfamily.

It localises to the cell inner membrane. It catalyses the reaction heme b + (2E,6E)-farnesyl diphosphate + H2O = Fe(II)-heme o + diphosphate. It participates in porphyrin-containing compound metabolism; heme O biosynthesis; heme O from protoheme: step 1/1. In terms of biological role, converts heme B (protoheme IX) to heme O by substitution of the vinyl group on carbon 2 of heme B porphyrin ring with a hydroxyethyl farnesyl side group. In Cupriavidus metallidurans (strain ATCC 43123 / DSM 2839 / NBRC 102507 / CH34) (Ralstonia metallidurans), this protein is Protoheme IX farnesyltransferase.